The primary structure comprises 256 residues: Peptidyl-prolyl cis-trans isomerase FKBP19, chloroplastic (256 aa).

The N-terminal 29 residues, 1 to 29, are a transit peptide targeting the chloroplast; it reads MASISSFGCFPQSTALAGTSSTTRCRTTV. The transit peptide at 30–88 directs the protein to the thylakoid; the sequence is AARLADQSDDFAPLRSSGGNCGCVNNSGEFDRRKLLVSSVGLLIGALSYDSKDGDFASA. Positions 135-254 constitute a PPIase FKBP-type domain; sequence GDKVVVDWDG…LFDVELLKIV (120 aa). Residue S164 is modified to Phosphoserine.

It belongs to the FKBP-type PPIase family.

It localises to the plastid. Its subcellular location is the chloroplast thylakoid lumen. The catalysed reaction is [protein]-peptidylproline (omega=180) = [protein]-peptidylproline (omega=0). In terms of biological role, PPIases accelerate the folding of proteins. It catalyzes the cis-trans isomerization of proline imidic peptide bonds in oligopeptides. In Arabidopsis thaliana (Mouse-ear cress), this protein is Peptidyl-prolyl cis-trans isomerase FKBP19, chloroplastic (FKBP19).